We begin with the raw amino-acid sequence, 663 residues long: Rho GTPase-activating protein 18 (663 aa).

Disordered stretches follow at residues 14 to 73 (AYHP…DESM) and 85 to 106 (RSNENRQEGQEAIVVKEPDEGE). Basic and acidic residues predominate over residues 27 to 37 (SHVKGGDEATS). Positions 38 to 51 (SRRYGQYTINQEGS) are enriched in polar residues. Residues S65 and S68 each carry the phosphoserine modification. The span at 85-102 (RSNENRQEGQEAIVVKEP) shows a compositional bias: basic and acidic residues. The residue at position 156 (T156) is a Phosphothreonine. 2 disordered regions span residues 173–228 (FAQQ…PASE) and 245–277 (KEFSKERTQKISSNDSLPSFRLPKDKTGTTRIG). 2 stretches are compositionally biased toward basic and acidic residues: residues 178 to 205 (EAQEKPPDDSDLRSVRTNENKGQGKDDQ) and 212 to 222 (DSKEQISRVPE). Residues S260 and S263 each carry the phosphoserine modification. The Rho-GAP domain maps to 324–523 (IPLTILLEQD…LLIRYQKILW (200 aa)). The residue at position 610 (S610) is a Phosphoserine.

In terms of assembly, interacts with MPHOSPH6. As to expression, widely expressed: expressed in most organs, except small intestine.

The protein localises to the cytoplasm. In terms of biological role, rho GTPase activating protein that suppresses F-actin polymerization by inhibiting Rho. Rho GTPase activating proteins act by converting Rho-type GTPases to an inactive GDP-bound state. Plays a key role in tissue tension and 3D tissue shape by regulating cortical actomyosin network formation. Acts downstream of YAP1 and inhibits actin polymerization, which in turn reduces nuclear localization of YAP1. Regulates cell shape, spreading, and migration. The protein is Rho GTPase-activating protein 18 of Mus musculus (Mouse).